We begin with the raw amino-acid sequence, 505 residues long: 4-trimethylaminobutyraldehyde dehydrogenase (505 aa).

NAD(+) contacts are provided by residues Lys191 and 243–247; that span reads GSVPT. Glu265 serves as the catalytic Proton acceptor. Cys299 (nucleophile) is an active-site residue. NAD(+) is bound at residue Glu402.

It belongs to the aldehyde dehydrogenase family. Homotetramer. Constitutively expressed in all organs tested: brain, eye, gill, GI, heart, liver, kidney, muscle, skin, testis and ovary.

Its subcellular location is the cytoplasm. The protein resides in the cytosol. The catalysed reaction is 4-(trimethylamino)butanal + NAD(+) + H2O = 4-(trimethylamino)butanoate + NADH + 2 H(+). It catalyses the reaction an aldehyde + NAD(+) + H2O = a carboxylate + NADH + 2 H(+). It functions in the pathway amine and polyamine biosynthesis; carnitine biosynthesis. In terms of biological role, converts gamma-trimethylaminobutyraldehyde into gamma-butyrobetaine with high efficiency (in vitro). Can catalyze the irreversible oxidation of a broad range of aldehydes to the corresponding acids in an NAD-dependent reaction, but with low efficiency. The polypeptide is 4-trimethylaminobutyraldehyde dehydrogenase (aldh9A1) (Oryzias latipes (Japanese rice fish)).